The sequence spans 96 residues: UPF0235 protein YggU (96 aa).

Belongs to the UPF0235 family.

This chain is UPF0235 protein YggU, found in Salmonella typhimurium (strain LT2 / SGSC1412 / ATCC 700720).